The chain runs to 198 residues: MSLAVTLASTSKSRRALLAAAGVEADGVAPNVDEESFRNTMRANKLPVREQAMQLAELKAMRVSAKRPGLVIGGDQMLALGDEAFDKPADLEAAKNHLRQLSGKSHTLETAIVICEDGAPIWRHLARPKLTMRPLTEDFIETYVSSCGDALLSTVGAYQLEGPGAQLFTRIEGDYFSILGLPLLPLLDYLRIRKVLPT.

The active-site Proton acceptor is Asp75.

Belongs to the Maf family. Requires a divalent metal cation as cofactor.

It is found in the cytoplasm. The enzyme catalyses a ribonucleoside 5'-triphosphate + H2O = a ribonucleoside 5'-phosphate + diphosphate + H(+). The catalysed reaction is a 2'-deoxyribonucleoside 5'-triphosphate + H2O = a 2'-deoxyribonucleoside 5'-phosphate + diphosphate + H(+). Functionally, nucleoside triphosphate pyrophosphatase. May have a dual role in cell division arrest and in preventing the incorporation of modified nucleotides into cellular nucleic acids. This is Nucleoside triphosphate pyrophosphatase from Hyphomonas neptunium (strain ATCC 15444).